Reading from the N-terminus, the 356-residue chain is Photosynthetic reaction center cytochrome c subunit (356 aa).

Positions methionine 1 to glycine 20 are cleaved as a signal peptide. Cysteine 21 is lipidated: S-diacylglycerol cysteine. Positions 94, 107, 110, 111, 130, 144, 152, 155, 156, 253, 264, 267, 268, 325, 328, and 329 each coordinate heme.

As to quaternary structure, component of the photosynthetic reaction center composed of protein subunits L (PufL), M (PufM), H (PuhA) and cytochrome C (PufC). In terms of processing, binds 4 heme groups per subunit. Post-translationally, after the signal sequence is removed, the N-terminal cysteine is modified to form a diacylglyceride thioether, but the alpha-amino group is free and is not N-palmitoylated.

The protein resides in the cellular chromatophore membrane. In terms of biological role, the reaction center of purple bacteria contains a tightly bound cytochrome molecule which re-reduces the photo oxidized primary electron donor. This chain is Photosynthetic reaction center cytochrome c subunit, found in Blastochloris viridis (Rhodopseudomonas viridis).